A 169-amino-acid chain; its full sequence is Small ribosomal subunit protein uS5 (169 aa).

The 64-residue stretch at 14–77 folds into the S5 DRBM domain; that stretch reads MKEQVVDIRR…QAAKKNLLLV (64 aa).

Belongs to the universal ribosomal protein uS5 family. Part of the 30S ribosomal subunit. Contacts proteins S4 and S8.

Its function is as follows. With S4 and S12 plays an important role in translational accuracy. In terms of biological role, located at the back of the 30S subunit body where it stabilizes the conformation of the head with respect to the body. This is Small ribosomal subunit protein uS5 from Alkaliphilus metalliredigens (strain QYMF).